Consider the following 130-residue polypeptide: Small ribosomal subunit protein uS9 (130 aa).

Positions 106-130 (RDSRKVERKKPGLKKARKASQFSKR) are disordered. A compositionally biased stretch (basic residues) spans 111 to 130 (VERKKPGLKKARKASQFSKR).

The protein belongs to the universal ribosomal protein uS9 family.

The chain is Small ribosomal subunit protein uS9 from Streptococcus pneumoniae (strain ATCC 700669 / Spain 23F-1).